The following is an 893-amino-acid chain: TBC domain-containing protein kinase-like protein (893 aa).

The Protein kinase domain occupies 1-274; sequence MFPLRDTEMG…EELMHDHLFS (274 aa). The Rab-GAP TBC domain occupies 466-651; it reads DIPPLLRGIT…HLWDTLLLGN (186 aa). Residues 790-889 form the Rhodanese domain; it reads SKPKLLVVDI…IKPTGLLTVP (100 aa).

This sequence belongs to the protein kinase superfamily. In terms of assembly, component of the FERRY complex.

It is found in the cytoplasm. Its subcellular location is the cytoskeleton. The protein resides in the spindle. The protein localises to the midbody. It localises to the early endosome. Functionally, component of the FERRY complex (Five-subunit Endosomal Rab5 and RNA/ribosome intermediary). The FERRY complex directly interacts with mRNAs and RAB5A, and functions as a RAB5A effector involved in the localization and the distribution of specific mRNAs most likely by mediating their endosomal transport. The complex recruits mRNAs and ribosomes to early endosomes through direct mRNA-interaction. Also involved in the modulation of mTOR signaling and expression of mTOR complex components. Involved in the control of actin-cytoskeleton organization. This is TBC domain-containing protein kinase-like protein from Gallus gallus (Chicken).